Reading from the N-terminus, the 107-residue chain is Flagellar transcriptional regulator FlhD (107 aa).

It belongs to the FlhD family. Homodimer; disulfide-linked. Forms a heterohexamer composed of two FlhC and four FlhD subunits. Each FlhC binds a FlhD dimer, forming a heterotrimer, and a hexamer assembles by dimerization of two heterotrimers.

The protein localises to the cytoplasm. In terms of biological role, functions in complex with FlhC as a master transcriptional regulator that regulates transcription of several flagellar and non-flagellar operons by binding to their promoter region. Activates expression of class 2 flagellar genes, including fliA, which is a flagellum-specific sigma factor that turns on the class 3 genes. Also regulates genes whose products function in a variety of physiological pathways. The polypeptide is Flagellar transcriptional regulator FlhD (Bordetella bronchiseptica (strain ATCC BAA-588 / NCTC 13252 / RB50) (Alcaligenes bronchisepticus)).